The primary structure comprises 419 residues: MTTQLEQAWELAKQRFAAVGIDVEEALRQLDRLPVSMHCWQGDDVSGFENPEGSLTGGIQATGNYPGKARNASELRADLEQAMRLIPGPKRLNLHAIYLESDTPVARDQIKPEHFKNWVEWAKANQLGLDFNPSCFSHPLSADGFTLSHADDSIRQFWIDHCKASRRVSAYFGEQLGTPSVMNIWIPDGMKDITVDRLAPRQRLLAALDEVISEKLDPAHHIDAVESKLFGIGAESYTVGSNEFYMGYATSRQTALCLDAGHFHPTEVISDKISAAMLYVPQLLLHVSRPVRWDSDHVVLLDDETQAIASEIVRHDLFDRVHIGLDFFDASINRIAAWVIGTRNMKKALLRALLEPTTELRKLEAAGDYTARLALLEEQKSLPWQAVWEMYCQRHDTPAGSEWLESVRAYEKAILSQRG.

Positions 262, 294, and 296 each coordinate Mn(2+).

This sequence belongs to the rhamnose isomerase family. As to quaternary structure, homotetramer. The cofactor is Mn(2+).

The protein resides in the cytoplasm. It carries out the reaction L-rhamnopyranose = L-rhamnulose. It functions in the pathway carbohydrate degradation; L-rhamnose degradation; glycerone phosphate from L-rhamnose: step 1/3. Catalyzes the interconversion of L-rhamnose and L-rhamnulose. This is L-rhamnose isomerase from Escherichia fergusonii (strain ATCC 35469 / DSM 13698 / CCUG 18766 / IAM 14443 / JCM 21226 / LMG 7866 / NBRC 102419 / NCTC 12128 / CDC 0568-73).